A 388-amino-acid polypeptide reads, in one-letter code: MRYLTSGESHGPQLTVIVEGVPANLEIKVEDINKEMFKRQGGYGRGRRMQIEKDTVEIVSGVRNGYTLGSPITMVVTNDDFTHWRKIMGAAPISDEERENMKRTITKPRPGHADLVGGMKYNHRDLRNVLERSSARETAARVAVGALCKVLLEQLDIEIYSRVVEIGGIKDKDFYDSETFKANLDRNDVRVIDDGIAQAMRDKIDEAKNDGDSIGGVVQVVVENMPVGVGSYVHYDRKLDGRIAQGVVSINAFKGVSFGEGFKAAEKPGSEIQDEILYNTELGYYRGSNHLGGLEGGMSNGMPIIVNGVMKPIPTLYKPLNSVDINTKEDFKATIERSDSCAVPAASIVCEHVVAFEIAKALLEEFQSNHIEQLQQQIADRRQLNVEF.

NADP(+)-binding residues include Arg-39 and Arg-45. FMN is bound by residues 132–134 (RSS), 251–252 (NA), Gly-296, 311–315 (KPIPT), and Arg-337.

It belongs to the chorismate synthase family. In terms of assembly, homotetramer. FMNH2 is required as a cofactor.

It carries out the reaction 5-O-(1-carboxyvinyl)-3-phosphoshikimate = chorismate + phosphate. It functions in the pathway metabolic intermediate biosynthesis; chorismate biosynthesis; chorismate from D-erythrose 4-phosphate and phosphoenolpyruvate: step 7/7. In terms of biological role, catalyzes the anti-1,4-elimination of the C-3 phosphate and the C-6 proR hydrogen from 5-enolpyruvylshikimate-3-phosphate (EPSP) to yield chorismate, which is the branch point compound that serves as the starting substrate for the three terminal pathways of aromatic amino acid biosynthesis. This reaction introduces a second double bond into the aromatic ring system. In Staphylococcus aureus (strain MRSA252), this protein is Chorismate synthase.